We begin with the raw amino-acid sequence, 228 residues long: MSQDRRYTGCNTHSNTHSAQDREKEGAVPKISGGKILPIYITGHAVLHAPAKPVTDFSGIQEIVRDMFATMFAAPGVGLAGPQIGLGLRIFVYSYTEGDTLHQGVAINPDLLIPKGVPKRQTNKQQANNSTSCDEPDREGCLSFPGYQFPLERAPQVTLSAFDENKKPFTVHATGWLARIFQHEFDHLQGTLYVDRLAQKYSGEVRQAVLNNKWGIPGKYWVPQEPKE.

Disordered regions lie at residues 1-28 (MSQD…EGAV) and 116-138 (GVPK…EPDR). Polar residues-rich tracts occupy residues 8–18 (TGCNTHSNTHS) and 123–133 (NKQQANNSTSC). Residues Cys-141 and His-183 each contribute to the Fe cation site. Glu-184 is an active-site residue. Residue His-187 coordinates Fe cation.

The protein belongs to the polypeptide deformylase family. It depends on Fe(2+) as a cofactor.

The catalysed reaction is N-terminal N-formyl-L-methionyl-[peptide] + H2O = N-terminal L-methionyl-[peptide] + formate. In terms of biological role, removes the formyl group from the N-terminal Met of newly synthesized proteins. Requires at least a dipeptide for an efficient rate of reaction. N-terminal L-methionine is a prerequisite for activity but the enzyme has broad specificity at other positions. The polypeptide is Peptide deformylase (Tropheryma whipplei (strain Twist) (Whipple's bacillus)).